Reading from the N-terminus, the 208-residue chain is Uracil phosphoribosyltransferase (208 aa).

5-phospho-alpha-D-ribose 1-diphosphate contacts are provided by residues Arg78, Arg103, and 130–138; that span reads DPMLATGGS. Uracil contacts are provided by residues Ile193 and 198–200; that span reads GDA. Residue Asp199 coordinates 5-phospho-alpha-D-ribose 1-diphosphate.

Belongs to the UPRTase family. The cofactor is Mg(2+).

It catalyses the reaction UMP + diphosphate = 5-phospho-alpha-D-ribose 1-diphosphate + uracil. It functions in the pathway pyrimidine metabolism; UMP biosynthesis via salvage pathway; UMP from uracil: step 1/1. With respect to regulation, allosterically activated by GTP. In terms of biological role, catalyzes the conversion of uracil and 5-phospho-alpha-D-ribose 1-diphosphate (PRPP) to UMP and diphosphate. This chain is Uracil phosphoribosyltransferase, found in Shewanella denitrificans (strain OS217 / ATCC BAA-1090 / DSM 15013).